We begin with the raw amino-acid sequence, 479 residues long: MSATALQVKTTQKPNSRLALEVAVPAERCQANYEAAVTRLSRTINLPGFRKGKVPRAVLLQQIGLVRIRATALETLVDAVWREVLEQESIEPLCEPELSGGFDALLESFQPGEALTLILETDVTPTPKLKATKGLQAEAEVVTFDPSKVDELIEQSRKQLATLVPVESRPAAIGDIAVVSFSGTYDDDGSAIEGGSSESMDVDLEDGQMIPGFVEGIIGMSLGSEKTVDCHFPDDYSKEDARGRKASFVINLKELKTRELPDLDDAFAQQSSDKATLEELRNDLEQRLQEDAKRRDRSNRHDALLEALTEQLEVDLPNTLVQQEIRNLVEQTASQFAQQGMDVKSMFTPELVRSLMESSRPEAEERLRRSLALTALAESEDLKIEESEISAKVKEVSRELSGERDIDPARLRQAVSDDLLKDKLLDWLEDNSTITEKVLESEAKTSKPAAKSKGSKTKSTKTKTNKAKTEKPASDKTKS.

The PPIase FKBP-type domain occupies 174 to 261 (GDIAVVSFSG…LKELKTRELP (88 aa)). Positions 437–479 (KVLESEAKTSKPAAKSKGSKTKSTKTKTNKAKTEKPASDKTKS) are disordered. Basic residues predominate over residues 453–466 (KGSKTKSTKTKTNK). The span at 467–479 (AKTEKPASDKTKS) shows a compositional bias: basic and acidic residues.

It belongs to the FKBP-type PPIase family. Tig subfamily.

It localises to the cytoplasm. The enzyme catalyses [protein]-peptidylproline (omega=180) = [protein]-peptidylproline (omega=0). Its function is as follows. Involved in protein export. Acts as a chaperone by maintaining the newly synthesized protein in an open conformation. Functions as a peptidyl-prolyl cis-trans isomerase. This Prochlorococcus marinus (strain MIT 9303) protein is Trigger factor.